Consider the following 450-residue polypeptide: F-box/FBD/LRR-repeat protein At5g22660 (450 aa).

An F-box domain is found at 12–58; sequence EDRISSLPDHLLSQILSNLPTENAVTTSILSTRWKDLWLSTPVLDID. LRR repeat units follow at residues 157–181 and 294–317; these read LPNL…KFIS and LSSL…LKHE. Residues 364-416 enclose the FBD domain; that stretch reads EEISLSSSVPKCLQSSLENVEIIRPNYGSGEEMKLSKYFLENSLVLKKFKLCR.

This chain is F-box/FBD/LRR-repeat protein At5g22660, found in Arabidopsis thaliana (Mouse-ear cress).